The sequence spans 507 residues: Germ cell nuclear acidic protein (507 aa).

Positions 1-51 (MDSGSSSSSSSSGSSSGSCSTSGSGSTSGSSTTSSSSSSSSSSSSSSSSSS) are enriched in low complexity. The interval 1-507 (MDSGSSSSSS…GRGRGAKAGK (507 aa)) is disordered. 4 consecutive short sequence motifs (SUMO interaction motif 1 (SIM)) follow at residues 12–15 (SGSS), 66–69 (CVVI), 86–89 (VCEI), and 108–111 (LIVI). Composition is skewed to basic and acidic residues over residues 122–141 (KNTKQKSDEPQMSVLEKEGV), 179–354 (SEAK…KGEM), and 431–449 (PQDRADPQDLADPQDRGDS). A compositionally biased stretch (basic residues) spans 480-507 (GRGRGRGRGRGRGRGRGRGRGRGAKAGK).

Belongs to the serine-aspartate repeat-containing protein (SDr) family. Interacts (via SIM domains) with SUMO2; this interaction allows the GCNA recruitment to DPCs sites. Interacts with TOP2A; this interaction allows the resolution of topoisomerase II (TOP2A) DNA-protein cross-links. Germ-cells specific.

The protein localises to the chromosome. It is found in the nucleus. Its subcellular location is the PML body. Its function is as follows. May play a role in DNA-protein cross-links (DPCs) clearance through a SUMO-dependent recruitment to sites of DPCs, ensuring the genomic stability by protecting germ cells and early embryos from various sources of damage. Can resolve the topoisomerase II (TOP2A) DPCs. This Mus musculus (Mouse) protein is Germ cell nuclear acidic protein.